Reading from the N-terminus, the 242-residue chain is Biosynthetic peptidoglycan transglycosylase (242 aa).

The chain crosses the membrane as a helical span at residues 12 to 32 (LLLWLIALSVLLVLLLRWVPP).

This sequence belongs to the glycosyltransferase 51 family.

The protein localises to the cell inner membrane. It catalyses the reaction [GlcNAc-(1-&gt;4)-Mur2Ac(oyl-L-Ala-gamma-D-Glu-L-Lys-D-Ala-D-Ala)](n)-di-trans,octa-cis-undecaprenyl diphosphate + beta-D-GlcNAc-(1-&gt;4)-Mur2Ac(oyl-L-Ala-gamma-D-Glu-L-Lys-D-Ala-D-Ala)-di-trans,octa-cis-undecaprenyl diphosphate = [GlcNAc-(1-&gt;4)-Mur2Ac(oyl-L-Ala-gamma-D-Glu-L-Lys-D-Ala-D-Ala)](n+1)-di-trans,octa-cis-undecaprenyl diphosphate + di-trans,octa-cis-undecaprenyl diphosphate + H(+). It participates in cell wall biogenesis; peptidoglycan biosynthesis. Its function is as follows. Peptidoglycan polymerase that catalyzes glycan chain elongation from lipid-linked precursors. This chain is Biosynthetic peptidoglycan transglycosylase, found in Stutzerimonas stutzeri (strain A1501) (Pseudomonas stutzeri).